A 157-amino-acid polypeptide reads, in one-letter code: Putative 4-hydroxy-4-methyl-2-oxoglutarate aldolase (157 aa).

Residues 78-81 (GDVI) and Arg-100 contribute to the substrate site. Asp-101 contributes to the a divalent metal cation binding site.

It belongs to the class II aldolase/RraA-like family. As to quaternary structure, homotrimer. Requires a divalent metal cation as cofactor.

The enzyme catalyses 4-hydroxy-4-methyl-2-oxoglutarate = 2 pyruvate. It carries out the reaction oxaloacetate + H(+) = pyruvate + CO2. Functionally, catalyzes the aldol cleavage of 4-hydroxy-4-methyl-2-oxoglutarate (HMG) into 2 molecules of pyruvate. Also contains a secondary oxaloacetate (OAA) decarboxylase activity due to the common pyruvate enolate transition state formed following C-C bond cleavage in the retro-aldol and decarboxylation reactions. This chain is Putative 4-hydroxy-4-methyl-2-oxoglutarate aldolase, found in Mycobacterium leprae (strain Br4923).